Here is a 231-residue protein sequence, read N- to C-terminus: Octanoyl-[acyl-carrier-protein]:protein N-octanoyltransferase LIPT2, mitochondrial (231 aa).

Residues 1–31 (MRQPAVRLVRLGRVPYAELLGLQDRWLRRLQ) constitute a mitochondrion transit peptide. The 184-residue stretch at 41–224 (GTEAGALLLC…AFKEIYKCTL (184 aa)) folds into the BPL/LPL catalytic domain. Substrate-binding positions include 85–92 (RGGLATFH), 154–156 (AIG), and 167–169 (GLA). Residue cysteine 185 is the Acyl-thioester intermediate of the active site.

The protein belongs to the LipB family.

The protein resides in the mitochondrion. The catalysed reaction is octanoyl-[ACP] + L-lysyl-[protein] = N(6)-octanoyl-L-lysyl-[protein] + holo-[ACP] + H(+). It functions in the pathway protein modification; protein lipoylation via endogenous pathway; protein N(6)-(lipoyl)lysine from octanoyl-[acyl-carrier-protein]: step 1/2. In terms of biological role, catalyzes the transfer of endogenously produced octanoic acid from octanoyl-acyl-carrier-protein (octanoyl-ACP) onto the lipoyl domains of lipoate-dependent enzymes such as the protein H of the glycine cleavage system (GCSH). Lipoyl-ACP can also act as a substrate although octanoyl-ACP is likely to be the physiological substrate. This Homo sapiens (Human) protein is Octanoyl-[acyl-carrier-protein]:protein N-octanoyltransferase LIPT2, mitochondrial.